We begin with the raw amino-acid sequence, 286 residues long: Pyridoxal kinase PdxY (286 aa).

Substrate contacts are provided by residues Ser-9 and 44–45 (TQ). Residues Asp-111, Glu-148, and Lys-181 each contribute to the ATP site. Residue Asp-222 participates in substrate binding.

The protein belongs to the pyridoxine kinase family. PdxY subfamily. In terms of assembly, homodimer. It depends on Mg(2+) as a cofactor.

The catalysed reaction is pyridoxal + ATP = pyridoxal 5'-phosphate + ADP + H(+). The protein operates within cofactor metabolism; pyridoxal 5'-phosphate salvage; pyridoxal 5'-phosphate from pyridoxal: step 1/1. Functionally, pyridoxal kinase involved in the salvage pathway of pyridoxal 5'-phosphate (PLP). Catalyzes the phosphorylation of pyridoxal to PLP. This is Pyridoxal kinase PdxY from Pasteurella multocida (strain Pm70).